The primary structure comprises 440 residues: MFLAQEIIRKKRDGQPLSEEEIRFFINGIRDNVVSEGQIAALAMTIYFHDMSMPERVALTMAMRDSGTVLNWKSLNLNGPLVDKHSTGGVGDVTSLMLGPMVAACGGYVPMISGRGLGHTGGTLDKLEAIPGFDIFPDDNAFRKIIQNVGVAIIGQTSSLAPADKRFYATRDITATVDSIPLITASILAKKLAEGLDALVMDVKVGSGAFMPTYSLSADLAQAIVGVANGAGCKTTALLTDMNQVLASSAGNGVEVREAVRFLTGEYRNPRLLEVTMALCVEMLLSGGLAHDEADARAKLQAVLDNGKAAEVFGRMVAAQKGPVDFVERYDSYLPVATLSKPVFAEQTGIITAMDTRALGMAVVALGGGRRRATDPIDYSVGLTEMARLGTRVDGQQPLAVIHANNEDDWQQAAEAVRAAITLGNNAPEETPVIYRRITE.

This sequence belongs to the thymidine/pyrimidine-nucleoside phosphorylase family. In terms of assembly, homodimer.

It carries out the reaction thymidine + phosphate = 2-deoxy-alpha-D-ribose 1-phosphate + thymine. Its pathway is pyrimidine metabolism; dTMP biosynthesis via salvage pathway; dTMP from thymine: step 1/2. The enzymes which catalyze the reversible phosphorolysis of pyrimidine nucleosides are involved in the degradation of these compounds and in their utilization as carbon and energy sources, or in the rescue of pyrimidine bases for nucleotide synthesis. The sequence is that of Thymidine phosphorylase from Yersinia pseudotuberculosis serotype O:1b (strain IP 31758).